Reading from the N-terminus, the 1851-residue chain is Voltage-dependent calcium channel type A subunit alpha-1 (1851 aa).

Residues 1–38 (MGGPKKEENPPGGGPTSLFILTEDNPIRKYTRFIIEWP) are Cytoplasmic-facing. One copy of the I repeat lies at 25 to 316 (NPIRKYTRFI…LVLGVLSGEF (292 aa)). A helical membrane pass occupies residues 39–57 (PFEYAVLLTIIANCVVLAL). Residues 58–75 (EEHLPGGDKTVLAQKLEK) lie on the Extracellular side of the membrane. The helical transmembrane segment at 76 to 95 (TEAYFLCIFCVEASLKILAL) threads the bilayer. The Cytoplasmic portion of the chain corresponds to 96-107 (GLVLHKHSYLRN). The helical transmembrane segment at 108–128 (IWNIMDFFVVVTGFMTQYPQI) threads the bilayer. Residues 129-133 (GPEVD) are Extracellular-facing. A helical transmembrane segment spans residues 134–152 (LRTLRAIRVLRPLKLVSGI). Residues 153–171 (PSLQVVLKSIIKAMAPLLQ) lie on the Cytoplasmic side of the membrane. The chain crosses the membrane as a helical span at residues 172-191 (IGLLVLFAIVIFAIIGLEFY). Residues 192–288 (SGALHKTCYS…WTNDALGSAF (97 aa)) lie on the Extracellular side of the membrane. N-linked (GlcNAc...) asparagine glycans are attached at residues N234 and N235. Residues 289 to 313 (NWIYFVPLIVIGSFFMLNLVLGVLS) form a helical membrane-spanning segment. Residues 314–441 (GEFSNERNRV…FWIRHTVKTQ (128 aa)) lie on the Cytoplasmic side of the membrane. The disordered stretch occupies residues 381–417 (RKKLKSLGKSKSTDTEEEEAEEDYGDDGYLKTRSKPQ). A compositionally biased stretch (acidic residues) spans 395–406 (TEEEEAEEDYGD). Residues 427–670 (EKRFRFWIRH…VFLAIAVDNL (244 aa)) form an II repeat. Residues 442 to 460 (WFYWFVIVLVFLNTVCVAV) traverse the membrane as a helical segment. Residues 461-475 (EHYGQPSFLTEFLYY) lie on the Extracellular side of the membrane. The chain crosses the membrane as a helical span at residues 476 to 495 (AEFIFLGLFMSEMFIKMYAL). The Cytoplasmic portion of the chain corresponds to 496-503 (GPRIYFES). A helical membrane pass occupies residues 504-522 (SFNRFDCVVISGSIFEVIW). Over 523 to 531 (SEVKGGSFG) the chain is Extracellular. Residues 532 to 550 (LSVLRALRLLRIFKVTKYW) form a helical membrane-spanning segment. Over 551 to 569 (SSLRNLVISLLNSMRSIIS) the chain is Cytoplasmic. The helical transmembrane segment at 570–589 (LLFLLFLFILIFALLGMQLF) threads the bilayer. Over 590–642 (GGQFNLPGGTPETNFNTFPIALLTVFQILTGEDWNEVMYQGIISQGGAQKGMI) the chain is Extracellular. A helical membrane pass occupies residues 643 to 667 (YSIYFIVLVLFGNYTLLNVFLAIAV). Over 668-767 (DNLANAQELT…IRRGAHWVVN (100 aa)) the chain is Cytoplasmic. The disordered stretch occupies residues 710-741 (ENGDGAVAPSKSKGKKKEEEKKEEEEVTEGPK). An III repeat occupies 762-1049 (AHWVVNLPYF…IITFQEQGEA (288 aa)). A helical transmembrane segment spans residues 768–786 (LPYFDFFIMVVISMSSIAL). Topologically, residues 787–802 (AAEDPVRENSRRNKIL) are extracellular. Residues 803–822 (NYFDYAFTGVFTIEMLLKIV) form a helical membrane-spanning segment. Topologically, residues 823-834 (DLGVILHPGSYL) are cytoplasmic. A helical transmembrane segment spans residues 835–853 (REFWNIMDAVVVICAAVSF). Over 854 to 866 (GFDMSGSSAGQNL) the chain is Extracellular. An N-linked (GlcNAc...) asparagine glycan is attached at N865. A helical membrane pass occupies residues 867 to 885 (STIKSLRVLRVLRPLKTIK). Topologically, residues 886 to 904 (RVPKLKAVFDCVVNSLKNV) are cytoplasmic. A helical transmembrane segment spans residues 905–924 (VNILIVYILFQFIFSVIGVQ). Residues 925-1013 (LFNGKFFYCT…EDRGPIQNFR (89 aa)) are Extracellular-facing. Residues 1014–1038 (IEMSIFYIVYFIVFPFFFVNIFVAL) traverse the membrane as a helical segment. Residues 1039–1093 (IIITFQEQGEAELQDGEIDKNQKSCIDFTIGARPLERYMPKNRNTFKYKVWRIVV) lie on the Cytoplasmic side of the membrane. The stretch at 1086-1347 (YKVWRIVVST…DNFDYLTRDS (262 aa)) is one IV repeat. The chain crosses the membrane as a helical span at residues 1094-1122 (STPFEYFIMMLIVFNTLLLMMKYHNQGDM). The Extracellular portion of the chain corresponds to 1123-1127 (YEKSL). The helical transmembrane segment at 1128–1147 (KYINMGFTGMFSVETVLKII) threads the bilayer. Over 1148–1155 (GFGVKNFF) the chain is Cytoplasmic. The chain crosses the membrane as a helical span at residues 1156–1174 (KDPWNIFDLITVLGSIVDA). Over 1175-1184 (LWMEFGHDDS) the chain is Extracellular. The chain crosses the membrane as a helical span at residues 1185-1203 (NSINVGFLRLFRAARLIKL). The Cytoplasmic segment spans residues 1204–1222 (LRQGYTIRILLWTFVQSFK). The chain crosses the membrane as a helical span at residues 1223 to 1242 (ALPYVCLLIAMLFFIYAIIG). Over 1243–1308 (MQVFGNIKLG…DAEKAPGEYC (66 aa)) the chain is Extracellular. The phenylalkylamine binding stretch occupies residues 1306-1348 (EYCGSTLAYAYFVSFIFFCSFLMLNLFVAVIMDNFDYLTRDSS). Residues 1309–1333 (GSTLAYAYFVSFIFFCSFLMLNLFV) traverse the membrane as a helical segment. The Cytoplasmic segment spans residues 1334–1851 (AVIMDNFDYL…HSDSDEEDWC (518 aa)). Positions 1353–1388 (HHLDEFVRIWAEYDPNATGKIHYTEMYDMLKNMDPP) constitute an EF-hand domain. Ca(2+) is bound by residues D1366, N1368, T1370, K1372, and E1377. Disordered stretches follow at residues 1513-1572 (DASR…HHDI), 1588-1653 (TRHP…SPAR), 1685-1764 (RAGI…DRDR), and 1823-1851 (VLPSPVLNGFKPKSGLNPRHSDSDEEDWC). Residues 1589–1600 (RHPRHGNSHPRY) show a composition bias toward basic residues. The span at 1604–1619 (SWSASTSPARSPSPSR) shows a compositional bias: low complexity. Polar residues-rich tracts occupy residues 1637-1649 (YGTTSLCQRSRSP) and 1698-1710 (KPSTLQLKPTNIN). The span at 1734–1764 (HHRDLLRDPRDMYYSSRERERDRERLRDRDR) shows a compositional bias: basic and acidic residues.

Belongs to the calcium channel alpha-1 subunit (TC 1.A.1.11) family. As to expression, expressed widely in the embryonic nervous system.

The protein resides in the membrane. In terms of biological role, voltage-sensitive calcium channels (VSCC) mediate the entry of calcium ions into excitable cells and are also involved in a variety of calcium-dependent processes, including muscle contraction, neurotransmitter release, gene expression, cell motility, cell division and cell death. Probably encodes a dihydropyridine-insensitive current. Vital for survival to adulthood. The sequence is that of Voltage-dependent calcium channel type A subunit alpha-1 (cac) from Drosophila melanogaster (Fruit fly).